The sequence spans 330 residues: ADP-L-glycero-D-manno-heptose-6-epimerase (330 aa).

NADP(+) contacts are provided by residues 11–12, 32–33, lysine 39, lysine 54, 75–79, and asparagine 92; these read FI, DN, and EGACS. The Proton acceptor role is filled by tyrosine 139. Lysine 143 is an NADP(+) binding site. Substrate is bound at residue asparagine 168. NADP(+) contacts are provided by valine 169 and lysine 177. Lysine 177 serves as the catalytic Proton acceptor. Residues arginine 179, histidine 186, 200–203, arginine 213, and tyrosine 292 each bind substrate; that span reads FGEY.

It belongs to the NAD(P)-dependent epimerase/dehydratase family. HldD subfamily. Homopentamer. NADP(+) is required as a cofactor.

The catalysed reaction is ADP-D-glycero-beta-D-manno-heptose = ADP-L-glycero-beta-D-manno-heptose. It functions in the pathway nucleotide-sugar biosynthesis; ADP-L-glycero-beta-D-manno-heptose biosynthesis; ADP-L-glycero-beta-D-manno-heptose from D-glycero-beta-D-manno-heptose 7-phosphate: step 4/4. Its function is as follows. Catalyzes the interconversion between ADP-D-glycero-beta-D-manno-heptose and ADP-L-glycero-beta-D-manno-heptose via an epimerization at carbon 6 of the heptose. This chain is ADP-L-glycero-D-manno-heptose-6-epimerase, found in Paraburkholderia xenovorans (strain LB400).